A 159-amino-acid chain; its full sequence is Transcriptional repressor NrdR (159 aa).

A zinc finger spans residues 3–34; that stretch reads CPFCGAEDTSVVDSRISEEGARIRRRRRCVEC. The ATP-cone domain occupies 49-139; the sequence is PQVIKQDGNR…VYRSFEDVGD (91 aa).

Belongs to the NrdR family. The cofactor is Zn(2+).

Its function is as follows. Negatively regulates transcription of bacterial ribonucleotide reductase nrd genes and operons by binding to NrdR-boxes. The sequence is that of Transcriptional repressor NrdR from Nitrosomonas europaea (strain ATCC 19718 / CIP 103999 / KCTC 2705 / NBRC 14298).